We begin with the raw amino-acid sequence, 214 residues long: MSRTLTLALSKGRILEETLPLLARCGIEPAEDPDASRKLIIGTNREDVRLLVVRASDVPTYVEHGGADLGVAGRDVLLEHGGDGLYDPVDLGIARCRLMVAGPPDGPPPGRRPRVATKFVHLARQHFAAQGRQAEIIKLYGSMELAPLVGMADLIVDLVDTGNTLRANGLAPLEEIMPISSRLVVNKASLKTSPDRLGTLIDDLAAAARAKDTS.

This sequence belongs to the ATP phosphoribosyltransferase family. Short subfamily. As to quaternary structure, heteromultimer composed of HisG and HisZ subunits.

The protein localises to the cytoplasm. The enzyme catalyses 1-(5-phospho-beta-D-ribosyl)-ATP + diphosphate = 5-phospho-alpha-D-ribose 1-diphosphate + ATP. It functions in the pathway amino-acid biosynthesis; L-histidine biosynthesis; L-histidine from 5-phospho-alpha-D-ribose 1-diphosphate: step 1/9. Its function is as follows. Catalyzes the condensation of ATP and 5-phosphoribose 1-diphosphate to form N'-(5'-phosphoribosyl)-ATP (PR-ATP). Has a crucial role in the pathway because the rate of histidine biosynthesis seems to be controlled primarily by regulation of HisG enzymatic activity. The chain is ATP phosphoribosyltransferase from Halorhodospira halophila (strain DSM 244 / SL1) (Ectothiorhodospira halophila (strain DSM 244 / SL1)).